The sequence spans 297 residues: Calponin-1 (297 aa).

Residues 28–131 form the Calponin-homology (CH) domain; that stretch reads HQREQELREW…STLLALASMA (104 aa). Calponin-like repeat units lie at residues 164–189, 204–229, and 243–268; these read IGLQMGTNKFASQQGMTAYGTRRHLY, ISLQMGTNKGASQAGMTAPGTKRQIF, and VSLQMGSNKGASQRGMTVYGLPRQVY. A Phosphothreonine; by ROCK2 modification is found at threonine 170. Serine 175 is modified (phosphoserine; by ROCK2). Phosphothreonine; by ROCK2 is present on residues threonine 180 and threonine 184. The residue at position 259 (threonine 259) is a Phosphothreonine; by ROCK2.

This sequence belongs to the calponin family. In terms of assembly, part of cGMP kinase signaling complex at least composed of ACTA2/alpha-actin, CNN1/calponin H1, PLN/phospholamban, PRKG1 and ITPR1. In terms of tissue distribution, smooth muscle, and tissues containing significant amounts of smooth muscle.

Thin filament-associated protein that is implicated in the regulation and modulation of smooth muscle contraction. It is capable of binding to actin, calmodulin and tropomyosin. The interaction of calponin with actin inhibits the actomyosin Mg-ATPase activity. The protein is Calponin-1 (CNN1) of Homo sapiens (Human).